The following is a 280-amino-acid chain: Formyltetrahydrofolate deformylase (280 aa).

Residues 8-86 enclose the ACT domain; it reads VLRTICPDQK…RELNPAGRRR (79 aa). Residue D225 is part of the active site.

It belongs to the PurU family.

It catalyses the reaction (6R)-10-formyltetrahydrofolate + H2O = (6S)-5,6,7,8-tetrahydrofolate + formate + H(+). It functions in the pathway purine metabolism; IMP biosynthesis via de novo pathway; formate from 10-formyl-5,6,7,8-tetrahydrofolate: step 1/1. In terms of biological role, catalyzes the hydrolysis of 10-formyltetrahydrofolate (formyl-FH4) to formate and tetrahydrofolate (FH4). The sequence is that of Formyltetrahydrofolate deformylase from Escherichia coli O6:H1 (strain CFT073 / ATCC 700928 / UPEC).